The following is a 207-amino-acid chain: V-type ATP synthase subunit D (207 aa).

It belongs to the V-ATPase D subunit family.

Its function is as follows. Produces ATP from ADP in the presence of a proton gradient across the membrane. This Streptococcus gordonii (strain Challis / ATCC 35105 / BCRC 15272 / CH1 / DL1 / V288) protein is V-type ATP synthase subunit D.